The primary structure comprises 69 residues: Pleurain-A4 (69 aa).

The N-terminal stretch at 1–22 (MFTLKKTLLLLFFLGTISISLC) is a signal peptide. A propeptide spanning residues 23–43 (KQERDADEDDGRKMTEEEVKR) is cleaved from the precursor. Cysteine 63 and cysteine 69 are joined by a disulfide.

It belongs to the frog skin active peptide (FSAP) family. Pleurain subfamily. Expressed by the skin glands.

Its subcellular location is the secreted. In terms of biological role, antimicrobial peptide. Has activity against Gram-positive and -negative bacteria, and fungi. Has little hemolytic activity on red blood cells. This is Pleurain-A4 from Nidirana pleuraden (Yunnan pond frog).